A 361-amino-acid polypeptide reads, in one-letter code: Peptide chain release factor 1 (361 aa).

Position 235 is an N5-methylglutamine (Gln235).

Belongs to the prokaryotic/mitochondrial release factor family. Methylated by PrmC. Methylation increases the termination efficiency of RF1.

Its subcellular location is the cytoplasm. Peptide chain release factor 1 directs the termination of translation in response to the peptide chain termination codons UAG and UAA. This Xanthomonas euvesicatoria pv. vesicatoria (strain 85-10) (Xanthomonas campestris pv. vesicatoria) protein is Peptide chain release factor 1.